Consider the following 481-residue polypeptide: uncharacterized protein (481 aa).

Helical transmembrane passes span 3-23 (YLPMMIVFPLIMAIIMNLLHG), 33-53 (FITAAILIILPFISQYGYYYF), 75-95 (QAIIVTLSLIASLVLITGMGE), 99-119 (NNMFVTLSLMGFASIAAIVLA), 122-142 (IFNLYVFFEIVSIVQAGLVFL), 155-175 (YMIMGNVAAALMLLGIAFLLA), 196-216 (IYGGLLLLIVGLAYGAGLPPF), 241-261 (FVLVGLMIIILKLFNGLDYFA), 264-284 (HAVLIALGVLAMVFGVVMALL), 303-323 (VATGLALGTPLGIVAGIFHAI), 351-371 (GGLLPLMPSVAFMVLCAKLAI), 400-420 (IIMIIVSIGTFVSMMKAFYLI), and 443-463 (VFSLFVLTALCIIIGLYPDIV).

The protein resides in the cell membrane. This is an uncharacterized protein from Methanocaldococcus jannaschii (strain ATCC 43067 / DSM 2661 / JAL-1 / JCM 10045 / NBRC 100440) (Methanococcus jannaschii).